Consider the following 129-residue polypeptide: Small ribosomal subunit protein uS11 (129 aa).

The segment at 108-129 (EDVTPIPHDGTKPKGGKRGRRV) is disordered.

Belongs to the universal ribosomal protein uS11 family. As to quaternary structure, part of the 30S ribosomal subunit.

Its function is as follows. Located on the platform of the 30S subunit. The sequence is that of Small ribosomal subunit protein uS11 from Methanothrix thermoacetophila (strain DSM 6194 / JCM 14653 / NBRC 101360 / PT) (Methanosaeta thermophila).